A 1219-amino-acid polypeptide reads, in one-letter code: FK506-binding protein 15 (1219 aa).

An N-acetylmethionine modification is found at Met-1. Phosphoserine occurs at positions 14 and 23. The tract at residues 41–66 (YTAPKQPKKGQGTAATGNQATPKTAP) is disordered. Over residues 53–66 (TAATGNQATPKTAP) the composition is skewed to polar residues. Positions 72–169 (PTILVATAVH…AVEFNKQVCI (98 aa)) are important for function in growth cone organization. Lys-92 carries the N6-acetyllysine modification. The PPIase FKBP-type domain maps to 197–290 (GDSLEVAYTG…VFEVEVRRVK (94 aa)). The tract at residues 294–349 (DSGSDGHSVSSRDSAAPSPIPGADNLSADPVVSPPTSIPFKSGEPALRTKSNSLSE) is disordered. Ser-307, Ser-311, Ser-326, Ser-344, Ser-346, and Ser-356 each carry phosphoserine. The disordered stretch occupies residues 381–433 (PQLDSNDSEIEDVNTLQGGGQPVVTPSVQPSLHPAHPALPQMTSQAPQPSVTG). Residues 421-433 (QMTSQAPQPSVTG) are compositionally biased toward polar residues. Coiled coils occupy residues 522 to 789 (AVSK…TDQA), 818 to 878 (DEHL…GVEA), and 925 to 951 (TLQL…AEER). Ser-619 is modified (phosphoserine). The tract at residues 739-761 (LEKNLSERKKKSAQERSQAEEEI) is disordered. Residues 931–1219 (QQEQEKEESS…DDDDDIDWLG (289 aa)) form a disordered region. Phosphoserine is present on residues Ser-939, Ser-940, Ser-941, and Ser-956. Positions 957–971 (QEQSASASSGQPQAP) are enriched in low complexity. Phosphoserine occurs at positions 979, 1024, 1056, 1061, 1065, and 1097. A compositionally biased stretch (polar residues) spans 1090-1100 (QESSTRLSLTS). Position 1099 is a phosphothreonine (Thr-1099). Ser-1114 bears the Phosphoserine mark. The span at 1123 to 1139 (LKKDDVTSSTGPHKELS) shows a compositional bias: basic and acidic residues. 5 positions are modified to phosphoserine: Ser-1158, Ser-1161, Ser-1162, Ser-1164, and Ser-1195. Thr-1203 carries the post-translational modification Phosphothreonine. Acidic residues predominate over residues 1207–1219 (GDDDDDDDIDWLG).

It belongs to the FKBP-type PPIase family. Interacts with WIP and actin. Interacts with TBC1D23.

The protein localises to the cytoplasm. It is found in the cell projection. The protein resides in the axon. It localises to the early endosome. Functionally, may be involved in the cytoskeletal organization of neuronal growth cones. Seems to be inactive as a PPIase. Involved in the transport of early endosomes at the level of transition between microfilament-based and microtubule-based movement. This is FK506-binding protein 15 (FKBP15) from Homo sapiens (Human).